The sequence spans 204 residues: VEL1-related protein AC977.05c (204 aa).

The N-terminal stretch at 1-17 (MIFKNLISLFFIGLATA) is a signal peptide.

This sequence belongs to the VEL1 family.

Its subcellular location is the cytoplasm. The protein resides in the cytosol. The protein is VEL1-related protein AC977.05c of Schizosaccharomyces pombe (strain 972 / ATCC 24843) (Fission yeast).